Consider the following 429-residue polypeptide: D-amino acid dehydrogenase (429 aa).

3-17 (VLILGSGVIGVTSAW) is an FAD binding site.

The protein belongs to the DadA oxidoreductase family. It depends on FAD as a cofactor.

The catalysed reaction is a D-alpha-amino acid + A + H2O = a 2-oxocarboxylate + AH2 + NH4(+). Its function is as follows. Oxidative deamination of D-amino acids. The chain is D-amino acid dehydrogenase from Xanthomonas axonopodis pv. citri (strain 306).